We begin with the raw amino-acid sequence, 209 residues long: Probable GTP-binding protein EngB (209 aa).

An EngB-type G domain is found at 22-198 (TPLEIAFVGR…NRTVGSWLDA (177 aa)). Mg(2+) contacts are provided by serine 37 and threonine 59.

It belongs to the TRAFAC class TrmE-Era-EngA-EngB-Septin-like GTPase superfamily. EngB GTPase family. It depends on Mg(2+) as a cofactor.

Its function is as follows. Necessary for normal cell division and for the maintenance of normal septation. This Neisseria meningitidis serogroup B (strain ATCC BAA-335 / MC58) protein is Probable GTP-binding protein EngB.